The primary structure comprises 240 residues: Methylthioribulose-1-phosphate dehydratase (240 aa).

Residue cysteine 99 coordinates substrate. The Zn(2+) site is built by histidine 116 and histidine 118. Glutamate 145 (proton donor/acceptor) is an active-site residue. Zn(2+) is bound at residue histidine 201.

Belongs to the aldolase class II family. MtnB subfamily. Zn(2+) is required as a cofactor.

It localises to the cytoplasm. It carries out the reaction 5-(methylsulfanyl)-D-ribulose 1-phosphate = 5-methylsulfanyl-2,3-dioxopentyl phosphate + H2O. It functions in the pathway amino-acid biosynthesis; L-methionine biosynthesis via salvage pathway; L-methionine from S-methyl-5-thio-alpha-D-ribose 1-phosphate: step 2/6. Functionally, catalyzes the dehydration of methylthioribulose-1-phosphate (MTRu-1-P) into 2,3-diketo-5-methylthiopentyl-1-phosphate (DK-MTP-1-P). In Ajellomyces capsulatus (strain H143) (Darling's disease fungus), this protein is Methylthioribulose-1-phosphate dehydratase.